We begin with the raw amino-acid sequence, 373 residues long: Chorismate synthase (373 aa).

An NADP(+)-binding site is contributed by Arg46. Residues 123-125 (RSS), 250-251 (NA), Gly295, 310-314 (KPTPS), and Arg337 each bind FMN.

The protein belongs to the chorismate synthase family. FMNH2 serves as cofactor.

The catalysed reaction is 5-O-(1-carboxyvinyl)-3-phosphoshikimate = chorismate + phosphate. The protein operates within metabolic intermediate biosynthesis; chorismate biosynthesis; chorismate from D-erythrose 4-phosphate and phosphoenolpyruvate: step 7/7. In terms of biological role, catalyzes the anti-1,4-elimination of the C-3 phosphate and the C-6 proR hydrogen from 5-enolpyruvylshikimate-3-phosphate (EPSP) to yield chorismate, which is the branch point compound that serves as the starting substrate for the three terminal pathways of aromatic amino acid biosynthesis. This reaction introduces a second double bond into the aromatic ring system. The protein is Chorismate synthase of Methanococcus aeolicus (strain ATCC BAA-1280 / DSM 17508 / OCM 812 / Nankai-3).